The primary structure comprises 153 residues: Aspartate carbamoyltransferase regulatory chain (153 aa).

Residues Cys-109, Cys-114, Cys-138, and Cys-141 each contribute to the Zn(2+) site.

Belongs to the PyrI family. In terms of assembly, contains catalytic and regulatory chains. Zn(2+) is required as a cofactor.

Its function is as follows. Involved in allosteric regulation of aspartate carbamoyltransferase. This is Aspartate carbamoyltransferase regulatory chain from Salmonella paratyphi A (strain ATCC 9150 / SARB42).